The chain runs to 251 residues: Tyrosine transport ATP-binding protein (251 aa).

Residues 2-248 (LQIKNLSKSF…TVEEILEKFE (247 aa)) enclose the ABC transporter domain. Position 39–46 (39–46 (GSNGTGKS)) interacts with ATP.

It belongs to the ABC transporter superfamily. The complex is probably composed of two ATP-binding proteins (CDR20291_0806), two transmembrane proteins (CDR20291_0807) and a solute-binding protein (CDR20291_0805).

Its subcellular location is the cell membrane. It carries out the reaction L-tyrosine(out) + ATP + H2O = L-tyrosine(in) + ADP + phosphate + H(+). Functionally, probably part of an ABC transporter complex involved in tyrosine uptake. May also import phenylalanine. Probably responsible for energy coupling to the transport system. The protein is Tyrosine transport ATP-binding protein of Clostridioides difficile (strain R20291) (Peptoclostridium difficile).